A 317-amino-acid polypeptide reads, in one-letter code: Mitochondrial outer membrane protein porin 4 (317 aa).

The disordered stretch occupies residues 1–30 (MEAETECKVPGVYSETGIPVEDPAPGLNSD).

It belongs to the eukaryotic mitochondrial porin (TC 1.B.8.1) family.

The protein localises to the mitochondrion outer membrane. Its function is as follows. Forms a channel through the mitochondrial outer membrane that allows diffusion of small hydrophilic molecules. The channel adopts an open conformation at low or zero membrane potential and a closed conformation at potentials above 30-40 mV. The open state has a weak anion selectivity whereas the closed state is cation-selective. The protein is Mitochondrial outer membrane protein porin 4 (VDAC4) of Oryza sativa subsp. japonica (Rice).